The following is a 117-amino-acid chain: Gamma-aminobutyric acid receptor-associated protein (117 aa).

Positions 1–22 are interaction with beta-tubulin; sequence MKFVYKEEHPFEKRRSEGEKIR. Residues 36-68 form an interaction with GABRG2 region; it reads APKARIGDLDKKKYLVPSDLTVGQFYFLIRKRI. The segment at 36–117 is interaction with GPHN; that stretch reads APKARIGDLD…AYSDESVYGL (82 aa). Residues 48 to 50 are interaction with LIR (LC3 nteracting Region) motif of ATG3; it reads KYL. Gly-116 carries the Phosphatidylethanolamine amidated glycine; alternate lipid modification. Gly-116 is lipidated: Phosphatidylserine amidated glycine; alternate. Residue Leu-117 is a propeptide, removed in mature form.

This sequence belongs to the ATG8 family. As to quaternary structure, interacts with GPHN and NSF. Interacts with ATG3, ATG7 and ATG13. Interacts with alpha-tubulin. Interacts with beta-tubulin. Interacts with GABRG2. Interacts with RB1CC1. Interacts with ULK1. Interacts with CALR. Interacts with DDX47. Interacts with TP53INP1 and TP53INP2. Interacts with TBC1D5. Interacts with TBC1D25. Directly interacts with SQSTM1. Interacts with MAPK15. Interacts with TECPR2. Interacts with PCM1. Interacts with TRIM5 and TRIM21. Interacts with MEFV. Interacts with KIF21B. Interacts with WDFY3; this interaction is required for WDFY3 recruitment to MAP1LC3B-positive p62/SQSTM1 bodies. Interacts with FLCN; interaction regulates autophagy. Interacts with UBA5. Interacts with KBTBD6 and KBTBD7; the interaction is direct and required for the ubiquitination of TIAM1. Interacts with reticulophagy regulators RETREG1, RETREG2 and RETREG3. Interacts with IRGM. Interacts with STX17. Interacts with CT55; this interaction may be important for GABARAP protein stability. Interacts with DNM2. Interacts with NCOA4 (via C-terminus). Post-translationally, the precursor molecule is cleaved by ATG4 (ATG4A, ATG4B, ATG4C or ATG4D) to expose the glycine at the C-terminus and form the cytosolic form, GABARAP-I. The processed form is then activated by APG7L/ATG7, transferred to ATG3 and conjugated to phosphatidylethanolamine (PE) phospholipid to form the membrane-bound form, GABARAP-II. During non-canonical autophagy, the processed form is conjugated to phosphatidylserine (PS) phospholipid. ATG4 proteins also mediate the delipidation of PE-conjugated forms. In addition, ATG4B and ATG4D mediate delipidation of ATG8 proteins conjugated to PS during non-canonical autophagy. ATG4B constitutes the major protein for proteolytic activation. ATG4D is the main enzyme for delipidation activity. As to expression, expressed in brain (at protein level). Can be found in both somatodendritic and axonal compartment of neurons.

The protein resides in the cytoplasmic vesicle. Its subcellular location is the autophagosome membrane. The protein localises to the endomembrane system. It localises to the cytoplasm. It is found in the cytoskeleton. The protein resides in the golgi apparatus membrane. In terms of biological role, ubiquitin-like modifier that plays a role in intracellular transport of GABA(A) receptors and its interaction with the cytoskeleton. Involved in autophagy: while LC3s are involved in elongation of the phagophore membrane, the GABARAP/GATE-16 subfamily is essential for a later stage in autophagosome maturation. Through its interaction with the reticulophagy receptor TEX264, participates in the remodeling of subdomains of the endoplasmic reticulum into autophagosomes upon nutrient stress, which then fuse with lysosomes for endoplasmic reticulum turnover. Also required for the local activation of the CUL3(KBTBD6/7) E3 ubiquitin ligase complex, regulating ubiquitination a nd degradation of TIAM1, a guanyl-nucleotide exchange factor (GEF) that activates RAC1 and downstream signal transduction. Thereby, regulates different biological processes including the organization of the cytoskeleton, cell migration and proliferation. Involved in apoptosis. This Rattus norvegicus (Rat) protein is Gamma-aminobutyric acid receptor-associated protein.